Consider the following 272-residue polypeptide: Putative pyruvate, phosphate dikinase regulatory protein (272 aa).

154–161 contacts ADP; sequence GVSRTSKS.

Belongs to the pyruvate, phosphate/water dikinase regulatory protein family. PDRP subfamily.

It carries out the reaction N(tele)-phospho-L-histidyl/L-threonyl-[pyruvate, phosphate dikinase] + ADP = N(tele)-phospho-L-histidyl/O-phospho-L-threonyl-[pyruvate, phosphate dikinase] + AMP + H(+). The enzyme catalyses N(tele)-phospho-L-histidyl/O-phospho-L-threonyl-[pyruvate, phosphate dikinase] + phosphate + H(+) = N(tele)-phospho-L-histidyl/L-threonyl-[pyruvate, phosphate dikinase] + diphosphate. Functionally, bifunctional serine/threonine kinase and phosphorylase involved in the regulation of the pyruvate, phosphate dikinase (PPDK) by catalyzing its phosphorylation/dephosphorylation. This chain is Putative pyruvate, phosphate dikinase regulatory protein, found in Wolbachia sp. subsp. Brugia malayi (strain TRS).